Here is a 631-residue protein sequence, read N- to C-terminus: MNVNELRSRAASQEQDPCTLSNYRGFEVVQSSLDLNVSFEKKNVSGTVTYELKNLKSTTEVVLDTSFLDIEQAFVDEKAVDFKLEARKEPFGSPLVIKLANVVEKLKISIKFATTENCSALQFIDKEATDSKVCDYLFSQCQAIHARSLFPCFDTPAVKSPYSFHVKSPSYTLMSGRPVECSEENTYRFEQPIPIPSYLVAIASGNLAGAPIGPRSTVYTEPPNLKACQWEFEKDMENFLVVAEDLIYKYEWLKYDALILPSSFPYGGMENPNITFATPTLISKDRSQVKVMAHELAHSWSGNLVTNCTWEHFWLNEGWTVYLERRILGGVASYEAKQRGEKDYVDAGEKVRHFAAILGWNDLVDTVKTIPSQYTRLVWDLKTVTPDDAFSKIPYEKGFSFLFYLETVLGGTDEFDPFMKHYFKKYRYKSLDSYQFIDTLYEFFEPKGKKDVLDSVDWNTWLYGEGVPPFTPKYDTRLADECYHLRDKWAAYEQNKGQFSASDIEHFEVNQHLLFLGTLTELFSNKKPAPEVYEELRKVYHQYSEASNCEIIASWNDLLLKSENFKPSDKIVQNFATWLGTVGRMKFARPGYKLLKDYVDKDLAIATFRKFESRYHPICKAMVRKDLGLDS.

Substrate contacts are provided by residues 140–142 (QCQ) and 265–270 (PYGGME). His-294 contacts Zn(2+). The active-site Proton acceptor is Glu-295. His-298 and Glu-317 together coordinate Zn(2+). Tyr-395 acts as the Proton donor in catalysis.

It belongs to the peptidase M1 family. Requires Zn(2+) as cofactor.

It is found in the cytoplasm. Its subcellular location is the nucleus. The catalysed reaction is an epoxide + H2O = an ethanediol. Functionally, aminopeptidase that preferentially cleaves di- and tripeptides. Also has low epoxide hydrolase activity (in vitro). Can hydrolyze the epoxide leukotriene LTA(4) but it forms preferentially 5,6-dihydroxy-7,9,11,14-eicosatetraenoic acid rather than the cytokine leukotriene B(4) as the product compared to the homologous mammalian enzyme (in vitro). The protein is Leucine aminopeptidase 2-2 of Meyerozyma guilliermondii (strain ATCC 6260 / CBS 566 / DSM 6381 / JCM 1539 / NBRC 10279 / NRRL Y-324) (Yeast).